The following is a 398-amino-acid chain: Streptopain (398 aa).

A signal peptide spans 1-27 (MNKKKLGIRLLSLLALGGFVLANPVFA). A propeptide spanning residues 28–145 (DQNFARNEKE…TTYAGTAEIK (118 aa)) is cleaved from the precursor. Residue Cys-192 is the Nucleophile of the active site. Cys-192 is subject to Cysteine methyl disulfide; in zymogen form. Residues Ser-282 and Gly-339 each contribute to the a protein site. Catalysis depends on His-340, which acts as the Proton acceptor. Residues 368 to 390 (RLDALNPSALGTGGGAGGFNGYQ) form a C-terminal active site loop region.

This sequence belongs to the peptidase C10 family. As to quaternary structure, monomer. Post-translationally, the mature protease is derived from the precursor sequence by cleavage, either in cis via an autocatalytic mechanism, or in trans by mature SpeB or host proteases (trypsin, plasmin or subtilisin). Maturation can involve a number of protein cleavage intermediates. Mature SpeB probably plays the most important role in protein maturation in physiological conditions. In terms of processing, methylthiolation at Cys-192 of the inactive zymogen form is probably involved in the mechanism of secretion of the proteinase into the culture fluid.

It localises to the secreted. It is found in the host extracellular space. Its subcellular location is the host cytoplasm. The enzyme catalyses Preferential cleavage with hydrophobic residues at P2, P1 and P1'.. Synthesized as an inactive zymogen to protect the intracellular components of the bacteria from proteolytic activity during protein production. Once secreted into the extracellular milieu, cleaved into the active protease: maturation can be mediated in cis by autocatalytic cleavage, or in trans by mature SpeB or host proteases. Protease activity is strongly inhibited by zinc and copper, which prevent its maturation into an active protease: inhibition by metal ions may be required to prevent proteolysis of streptococcal proteins. Cysteine protease that acts as a key streptococcal virulence factor by cleaving host proteins involved in immune response. Triggers inflammation by mediating cleavage of host proteins, which can both promote host pathogenesis by triggering sterile inflammation and/or restrict streptococcal infection, depending on host immune statue and infection site. Cleaves host gasdermin-A (GSDMA) in epithelial cells, promoting GSDMA activation and formation of gasdermin pores, triggering pyroptosis. Pyroptosis triggers the elimination of the infected skin cell, depriving the pathogen of its protective niche, while inducing an inflammatory response. This ultimately prevents bacterial penetration of the epithelial barrier and a subsequent systemic dissemination of the pathogen. Also mediates cleavage of the cytokine precursor interleukin-1 beta (IL1B) to its mature form, resulting in inflammation and septic shock. SpeB-mediated maturation of IL1B plays a dual role depending on infection site: while IL1B inflammatory response prevents bacterial growth during invasive skin infections, it promotes streptococcal infection of the nasopharynx by disrupting colonization resistance mediated by the microbiota. Inhibits host autophagy be catalyzing cleavage and inactivation of key autophagy factors, such as CALCOCO2, NBR1 and SQSTM1. Cleaves and inhibits a number of complement factors, such as C2, C3-beta chain of C3, C4, C5 or SERPING1, thereby promoting evasion of host immunity. May also impair adaptive immunity by catalyzing cleavage and degradation of host immunoglobulins to promote immune system evasion; the relevance of this activity is however unsure in vivo. Catalyzes maturation and release of the peptide hormone bradykinin from the precursor Kininogen-1 (KNG1) to produce hypotension during septic shock. Also involved in bacterial translocation across the host epithelial barrier by mediating cleavage and degradation of host epithelial junction proteins, such as CDH1 and OCLN. Additionally, has been involved in degradation of fibronectin and vitronectin, two host extracellular matrix proteins involved in tissue integrity. Also able to catalyze cleavage and degradation of streptococcal proteins, such as C5a peptidase, EndoS or SmeZ. Degradation of streptococcal proteins is however strictly regulated to preserve integrity of other virulence factors. This chain is Streptopain (speB), found in Streptococcus pyogenes serotype M28 (strain MGAS6180).